The sequence spans 197 residues: Putative sulfur carrier protein aq_1421 (197 aa).

Catalysis depends on Cys17, which acts as the Cysteine persulfide intermediate.

Belongs to the sulfur carrier protein TusA family.

The polypeptide is Putative sulfur carrier protein aq_1421 (Aquifex aeolicus (strain VF5)).